Reading from the N-terminus, the 96-residue chain is Keratin-associated protein 12-1 (96 aa).

A run of 14 repeats spans residues 10 to 14 (CQPAC), 15 to 19 (CAPSP), 24 to 28 (CYIPV), 30 to 34 (CQSSV), 35 to 39 (CVPVS), 45 to 49 (CVPVR), 50 to 54 (CQSSV), 55 to 59 (CVPVS), 60 to 64 (CRPVV), 70 to 74 (CQSSG), 75 to 79 (CCQPS), 80 to 84 (CTSVL), 85 to 89 (CRPIS), and 90 to 94 (CSTPS). A 14 X 5 AA approximate repeats region spans residues 10 to 94 (CQPACCAPSP…CRPISCSTPS (85 aa)).

The protein belongs to the KRTAP type 12 family. Interacts with hair keratins. In terms of tissue distribution, restricted to a narrow region of the hair fiber cuticle, lying approximately 20 cell layers above the apex of the dermal papilla of the hair root; not detected in any other tissues.

Its function is as follows. In the hair cortex, hair keratin intermediate filaments are embedded in an interfilamentous matrix, consisting of hair keratin-associated proteins (KRTAP), which are essential for the formation of a rigid and resistant hair shaft through their extensive disulfide bond cross-linking with abundant cysteine residues of hair keratins. The matrix proteins include the high-sulfur and high-glycine-tyrosine keratins. The protein is Keratin-associated protein 12-1 (KRTAP12-1) of Homo sapiens (Human).